The sequence spans 243 residues: MADWLYQYPPLLAGTLIKRYKRFLADIELDTGEVVTAHCPNTGPMTGMCAPHSRVQISQSNNPKRKLAYTWEMIEVCDTEPTWVGVNTQIPNLVVKQLLQNRLLPTLGEYDQVKSEVRYGREKSRIDFLLTGTAQPAYIEVKSTTWAIEKQALFPDTVTIRGQKHIRELISVLPAAQAYLLFFINRADCTTFAPGDQADPEYGKLLREAVATGVGLLPCRFEITPEGIRYLGLATVEESSLTR.

The protein belongs to the SfsA family.

The protein is Sugar fermentation stimulation protein homolog of Acaryochloris marina (strain MBIC 11017).